The following is a 271-amino-acid chain: Urease accessory protein UreD (271 aa).

Belongs to the UreD family. As to quaternary structure, ureD, UreF and UreG form a complex that acts as a GTP-hydrolysis-dependent molecular chaperone, activating the urease apoprotein by helping to assemble the nickel containing metallocenter of UreC. The UreE protein probably delivers the nickel.

The protein resides in the cytoplasm. In terms of biological role, required for maturation of urease via the functional incorporation of the urease nickel metallocenter. This chain is Urease accessory protein UreD, found in Actinomyces naeslundii.